Reading from the N-terminus, the 237-residue chain is Ribonuclease PH (237 aa).

Phosphate contacts are provided by residues R86 and 124 to 126 (GTR).

It belongs to the RNase PH family. In terms of assembly, homohexameric ring arranged as a trimer of dimers.

The catalysed reaction is tRNA(n+1) + phosphate = tRNA(n) + a ribonucleoside 5'-diphosphate. Phosphorolytic 3'-5' exoribonuclease that plays an important role in tRNA 3'-end maturation. Removes nucleotide residues following the 3'-CCA terminus of tRNAs; can also add nucleotides to the ends of RNA molecules by using nucleoside diphosphates as substrates, but this may not be physiologically important. Probably plays a role in initiation of 16S rRNA degradation (leading to ribosome degradation) during starvation. This Bradyrhizobium sp. (strain ORS 278) protein is Ribonuclease PH.